A 22-amino-acid chain; its full sequence is Hemoglobinase-like protein 2 (22 aa).

This sequence belongs to the peptidase C13 family.

The enzyme catalyses Hydrolysis of proteins and small molecule substrates at -Asn-|-Xaa- bonds.. The chain is Hemoglobinase-like protein 2 from Fasciola hepatica (Liver fluke).